The sequence spans 760 residues: Penicillin-binding protein 1B (760 aa).

Topologically, residues 1–8 are cytoplasmic; it reads MFFNFKKY. The chain crosses the membrane as a helical; Signal-anchor for type II membrane protein span at residues 9–29; it reads FLIKVFFFVLILTLCYGLYLY. The Extracellular segment spans residues 30-760; that stretch reads VKINRFINGK…NFLFWLKNLF (731 aa). The interval 136 to 308 is transglycosylase; it reads FRLEPKLIAM…SLYSPWTNPN (173 aa). Catalysis depends on E174, which acts as the Proton donor; for transglycosylase activity. Positions 392–684 are transpeptidase; sequence EQAVKIEIPI…SSGAMQIYKR (293 aa). The Acyl-ester intermediate; for transpeptidase activity role is filled by S451.

It in the N-terminal section; belongs to the glycosyltransferase 51 family. The protein in the C-terminal section; belongs to the transpeptidase family.

Its subcellular location is the cell membrane. The enzyme catalyses [GlcNAc-(1-&gt;4)-Mur2Ac(oyl-L-Ala-gamma-D-Glu-L-Lys-D-Ala-D-Ala)](n)-di-trans,octa-cis-undecaprenyl diphosphate + beta-D-GlcNAc-(1-&gt;4)-Mur2Ac(oyl-L-Ala-gamma-D-Glu-L-Lys-D-Ala-D-Ala)-di-trans,octa-cis-undecaprenyl diphosphate = [GlcNAc-(1-&gt;4)-Mur2Ac(oyl-L-Ala-gamma-D-Glu-L-Lys-D-Ala-D-Ala)](n+1)-di-trans,octa-cis-undecaprenyl diphosphate + di-trans,octa-cis-undecaprenyl diphosphate + H(+). It carries out the reaction Preferential cleavage: (Ac)2-L-Lys-D-Ala-|-D-Ala. Also transpeptidation of peptidyl-alanyl moieties that are N-acyl substituents of D-alanine.. It participates in cell wall biogenesis; peptidoglycan biosynthesis. In terms of biological role, cell wall formation. Synthesis of cross-linked peptidoglycan from the lipid intermediates. The enzyme has a penicillin-insensitive transglycosylase N-terminal domain (formation of linear glycan strands) and a penicillin-sensitive transpeptidase C-terminal domain (cross-linking of the peptide subunits). This is Penicillin-binding protein 1B (mrcB) from Buchnera aphidicola subsp. Acyrthosiphon pisum (strain APS) (Acyrthosiphon pisum symbiotic bacterium).